The following is a 184-amino-acid chain: Photosystem I assembly protein Ycf4 (184 aa).

2 helical membrane passes run 22–42 and 57–77; these read FCWA…GTSS and IVFF…LFIS.

It belongs to the Ycf4 family.

The protein localises to the plastid. It is found in the chloroplast thylakoid membrane. In terms of biological role, seems to be required for the assembly of the photosystem I complex. The chain is Photosystem I assembly protein Ycf4 from Lactuca sativa (Garden lettuce).